We begin with the raw amino-acid sequence, 232 residues long: Small ribosomal subunit protein uS3 (232 aa).

In terms of domain architecture, KH type-2 spans 39–107 (VRQFLIKELA…PAQINIAEVR (69 aa)).

The protein belongs to the universal ribosomal protein uS3 family. In terms of assembly, part of the 30S ribosomal subunit. Forms a tight complex with proteins S10 and S14.

Functionally, binds the lower part of the 30S subunit head. Binds mRNA in the 70S ribosome, positioning it for translation. The chain is Small ribosomal subunit protein uS3 from Serratia proteamaculans (strain 568).